A 729-amino-acid chain; its full sequence is Fatty acid oxidation complex subunit alpha (729 aa).

Residues 1–189 (MLYKGDTLYL…KIGLVDGVVK (189 aa)) form an enoyl-CoA hydratase/isomerase region. Residue D296 participates in substrate binding. The segment at 311 to 729 (ETPKQAAVLG…ARPVGDLKTA (419 aa)) is 3-hydroxyacyl-CoA dehydrogenase. Residues M324, D343, 400–402 (IVE), K407, and S429 contribute to the NAD(+) site. The For 3-hydroxyacyl-CoA dehydrogenase activity role is filled by H450. N453 contributes to the NAD(+) binding site. Substrate-binding residues include N500 and Y660. Residues 708-729 (RHNEPYYPPVEPARPVGDLKTA) form a disordered region.

It in the N-terminal section; belongs to the enoyl-CoA hydratase/isomerase family. The protein in the C-terminal section; belongs to the 3-hydroxyacyl-CoA dehydrogenase family. As to quaternary structure, heterotetramer of two alpha chains (FadB) and two beta chains (FadA).

It carries out the reaction a (3S)-3-hydroxyacyl-CoA + NAD(+) = a 3-oxoacyl-CoA + NADH + H(+). The enzyme catalyses a (3S)-3-hydroxyacyl-CoA = a (2E)-enoyl-CoA + H2O. The catalysed reaction is a 4-saturated-(3S)-3-hydroxyacyl-CoA = a (3E)-enoyl-CoA + H2O. It catalyses the reaction (3S)-3-hydroxybutanoyl-CoA = (3R)-3-hydroxybutanoyl-CoA. It carries out the reaction a (3Z)-enoyl-CoA = a 4-saturated (2E)-enoyl-CoA. The enzyme catalyses a (3E)-enoyl-CoA = a 4-saturated (2E)-enoyl-CoA. Its pathway is lipid metabolism; fatty acid beta-oxidation. Functionally, involved in the aerobic and anaerobic degradation of long-chain fatty acids via beta-oxidation cycle. Catalyzes the formation of 3-oxoacyl-CoA from enoyl-CoA via L-3-hydroxyacyl-CoA. It can also use D-3-hydroxyacyl-CoA and cis-3-enoyl-CoA as substrate. This chain is Fatty acid oxidation complex subunit alpha, found in Escherichia coli O157:H7.